A 622-amino-acid chain; its full sequence is UvrABC system protein C (622 aa).

One can recognise a GIY-YIG domain in the interval Ser12–Phe91. The UVR domain maps to Arg201 to Thr236.

Belongs to the UvrC family. Interacts with UvrB in an incision complex.

The protein localises to the cytoplasm. The UvrABC repair system catalyzes the recognition and processing of DNA lesions. UvrC both incises the 5' and 3' sides of the lesion. The N-terminal half is responsible for the 3' incision and the C-terminal half is responsible for the 5' incision. The polypeptide is UvrABC system protein C (Geotalea daltonii (strain DSM 22248 / JCM 15807 / FRC-32) (Geobacter daltonii)).